Consider the following 441-residue polypeptide: Phosphoribosylamine--glycine ligase (441 aa).

One can recognise an ATP-grasp domain in the interval 112–319 (RNFMKKYGIE…FTEIMSAVVK (208 aa)). 139 to 196 (IEKLGDVAVKPSGLTGGKGVKVMGDQLPDLKAAKDYTSELLEKGPVVIEERFIGEEFT) provides a ligand contact to ATP. Residues glutamine 277, glutamate 289, and asparagine 291 each contribute to the Mg(2+) site. Glutamine 277, glutamate 289, and asparagine 291 together coordinate Mn(2+).

It belongs to the GARS family. It depends on Mg(2+) as a cofactor. Mn(2+) is required as a cofactor.

The enzyme catalyses 5-phospho-beta-D-ribosylamine + glycine + ATP = N(1)-(5-phospho-beta-D-ribosyl)glycinamide + ADP + phosphate + H(+). The protein operates within purine metabolism; IMP biosynthesis via de novo pathway; N(1)-(5-phospho-D-ribosyl)glycinamide from 5-phospho-alpha-D-ribose 1-diphosphate: step 2/2. The polypeptide is Phosphoribosylamine--glycine ligase (Methanosarcina acetivorans (strain ATCC 35395 / DSM 2834 / JCM 12185 / C2A)).